The chain runs to 1271 residues: Breakpoint cluster region protein (1271 aa).

The residue at position 1 (M1) is an N-acetylmethionine. A kinase region spans residues M1 to A426. A coiled-coil region spans residues V28–R55. The segment at K67–E173 is disordered. The segment covering A87–A105 has biased composition (low complexity). Position 122 is a phosphoserine (S122). Low complexity predominate over residues P123–A138. S139 carries the phosphoserine modification. Residue Y177 is modified to Phosphotyrosine; by HCK. Residues E185 to D198 show a composition bias toward basic and acidic residues. Disordered stretches follow at residues E185–E247, G286–H392, and N416–A476. Residues S197–T385 are binding to ABL SH2-domain. Residues R199–M208 are compositionally biased toward polar residues. A phosphoserine mark is found at S202, S215, S222, and S236. At Y246 the chain carries Phosphotyrosine; by FES. Composition is skewed to low complexity over residues S346–S356 and S369–S382. Phosphoserine is present on residues S356, S377, and S382. At T385 the chain carries Phosphothreonine. A compositionally biased stretch (basic and acidic residues) spans D441 to D451. Phosphoserine is present on residues S459 and S463. An Omega-N-methylarginine modification is found at R471. Phosphoserine is present on residues S473 and S488. Positions M498–E691 constitute a DH domain. Y554 carries the phosphotyrosine modification. T641 is subject to Phosphothreonine. Y644 bears the Phosphotyrosine mark. T693 is modified (phosphothreonine). One can recognise a PH domain in the interval Q708–K866. The C2 domain maps to H893–I1020. Residue S894 is modified to Phosphoserine. The 195-residue stretch at V1054–Y1248 folds into the Rho-GAP domain. S1264 is subject to Phosphoserine.

As to quaternary structure, homotetramer. Interacts with PDZK1. May interact with CCPG1. Interacts with FES/FPS, ABL1, PIK3R1 and GRB2. Interacts with HCK. Interacts with SH2D5. Interacts with DLG4. Autophosphorylated. Phosphorylated by FES/FPS on tyrosine residues, leading to down-regulation of the BCR kinase activity. Phosphorylation at Tyr-177 by HCK is important for interaction with GRB2.

It localises to the postsynaptic density. It is found in the cell projection. The protein resides in the dendritic spine. Its subcellular location is the axon. The protein localises to the synapse. The catalysed reaction is L-seryl-[protein] + ATP = O-phospho-L-seryl-[protein] + ADP + H(+). The enzyme catalyses L-threonyl-[protein] + ATP = O-phospho-L-threonyl-[protein] + ADP + H(+). Its function is as follows. Protein with a unique structure having two opposing regulatory activities toward small GTP-binding proteins. The C-terminus is a GTPase-activating protein (GAP) domain which stimulates GTP hydrolysis by RAC1, RAC2 and CDC42. Accelerates the intrinsic rate of GTP hydrolysis of RAC1 or CDC42, leading to down-regulation of the active GTP-bound form. The central Dbl homology (DH) domain functions as guanine nucleotide exchange factor (GEF) that modulates the GTPases CDC42, RHOA and RAC1. Promotes the conversion of CDC42, RHOA and RAC1 from the GDP-bound to the GTP-bound form. The amino terminus contains an intrinsic kinase activity. Functions as an important negative regulator of neuronal RAC1 activity. Regulates macrophage functions such as CSF1-directed motility and phagocytosis through the modulation of RAC1 activity. Plays a major role as a RHOA GEF in keratinocytes being involved in focal adhesion formation and keratinocyte differentiation. The protein is Breakpoint cluster region protein of Homo sapiens (Human).